The primary structure comprises 314 residues: Olfactory receptor 5F1 (314 aa).

Over 1–25 (MTRKNYTSLTEFVLLGLADTLELQI) the chain is Extracellular. Asparagine 5 carries an N-linked (GlcNAc...) asparagine glycan. Residues 26-46 (ILFLFFLVIYTLTVLGNLGMI) form a helical membrane-spanning segment. The Cytoplasmic portion of the chain corresponds to 47–54 (LLIRIDSQ). The chain crosses the membrane as a helical span at residues 55-75 (LHTPMYFFLANLSFVDVCNST). Over 76–99 (TITPKMLADLLSEKKTISFAGCFL) the chain is Extracellular. A disulfide bridge links cysteine 97 with cysteine 189. A helical membrane pass occupies residues 100-120 (QMYFFISLATTECILFGLMAY). Residues 121–139 (DRYAAICRPLLYSLIMSRT) lie on the Cytoplasmic side of the membrane. The helical transmembrane segment at 140–160 (VYLKMAAGAFAAGLLNFMVNT) threads the bilayer. At 161 to 196 (SHVSSLSFCDSNVIHHFFCDSPPLFKLSCSDTILKE) the chain is on the extracellular side. Residues 197–217 (SISSILAGVNIVGTLLVILSS) traverse the membrane as a helical segment. Topologically, residues 218–237 (YSYVLFSIFSMHSGEGRHRA) are cytoplasmic. Residues 238–258 (FSTCASHLTAIILFYATCIYT) traverse the membrane as a helical segment. Residues 259 to 271 (YLRPSSSYSLNQD) are Extracellular-facing. The helical transmembrane segment at 272–292 (KVASVFYTVVIPMLNPLIYSL) threads the bilayer. Topologically, residues 293-314 (RSKEVKKALANVISRKRTSSFL) are cytoplasmic.

The protein belongs to the G-protein coupled receptor 1 family.

It localises to the cell membrane. Odorant receptor. This Homo sapiens (Human) protein is Olfactory receptor 5F1 (OR5F1).